We begin with the raw amino-acid sequence, 335 residues long: BTB and MATH domain-containing protein 39 (335 aa).

Positions Met-14–Leu-141 constitute an MATH domain. A BTB domain is found at Ala-161–Val-226.

This is BTB and MATH domain-containing protein 39 from Caenorhabditis briggsae.